The primary structure comprises 507 residues: MYSPESMNSNISSPSPPSSSSLNAPSLADAPEVRSDDGEAETSEPSTSVTAVPMEIVSQASTSAPVNQLLASGIDMSSVIKNNAVLQALLASASAGGFGDNAGLTMSKLLTAALANGSTAVAKRDAGSPRTDIPKKTRLKVFSNGFFMTFDKLSSCQKKYFWRCEYKNTCKARMHTDIVTEKILTFIHEHNHSAPIDEEVRLYGLDPTNIERNRVYIVGNVADPNQRRKIRKQVADREAAAKRLVQQQEEEQQKQQSASSIVAARAAYAQAMQNGSIPTSSGVASFLQSTSATAPMTSHSMLLAQMPFLNNIKTEMSNMVKNEQFTPERYTQHMSPNLPLQTATIAPLIIPTENYDSPSYRQPAIKRKATDLTNEEHDLRRDPMFQPTFELARKLRKLWKGEPNRYPRTTTTPTHHFEFFLSKNDGTDEHLYVPMRINLRDEAHLKEALQDFCGQQCIGMLLFGISPKISVMFNQPMLNNWDNNQFFLLDISNPSRWRLMYVDDQAV.

A compositionally biased stretch (low complexity) spans 1-26 (MYSPESMNSNISSPSPPSSSSLNAPS). A disordered region spans residues 1 to 51 (MYSPESMNSNISSPSPPSSSSLNAPSLADAPEVRSDDGEAETSEPSTSVTA). The segment at 135–192 (KKTRLKVFSNGFFMTFDKLSSCQKKYFWRCEYKNTCKARMHTDIVTEKILTFIHEHNH) adopts an FLYWCH-type zinc-finger fold.

In terms of biological role, probable transcription factor. Binds to the DNA sequence motif 5'-[AG]GGCGCCG-3' in the promoters of target genes, including micro-RNA genes, in order to repress expression, and acting redundantly with flh-2. This is FLYWCH transcription factor 1 from Caenorhabditis elegans.